A 237-amino-acid chain; its full sequence is 2-C-methyl-D-erythritol 4-phosphate cytidylyltransferase (237 aa).

Belongs to the IspD/TarI cytidylyltransferase family. IspD subfamily.

The enzyme catalyses 2-C-methyl-D-erythritol 4-phosphate + CTP + H(+) = 4-CDP-2-C-methyl-D-erythritol + diphosphate. The protein operates within isoprenoid biosynthesis; isopentenyl diphosphate biosynthesis via DXP pathway; isopentenyl diphosphate from 1-deoxy-D-xylulose 5-phosphate: step 2/6. Functionally, catalyzes the formation of 4-diphosphocytidyl-2-C-methyl-D-erythritol from CTP and 2-C-methyl-D-erythritol 4-phosphate (MEP). The sequence is that of 2-C-methyl-D-erythritol 4-phosphate cytidylyltransferase from Acaryochloris marina (strain MBIC 11017).